The sequence spans 142 residues: Hemoglobin subunit alpha-3 (142 aa).

Residues 2–142 (TLTDSDKAAV…VATVLTSKYR (141 aa)) form the Globin domain. Residue His59 coordinates O2. His88 lines the heme b pocket.

This sequence belongs to the globin family. In terms of assembly, heterotetramer of two alpha chains and two beta chains. In terms of tissue distribution, red blood cells.

Its function is as follows. This is a larval (tadpole) alpha-globin. The polypeptide is Hemoglobin subunit alpha-3 (hba3) (Xenopus laevis (African clawed frog)).